The following is a 164-amino-acid chain: Putative glutamine amidotransferase-like protein RP713 (164 aa).

A Glutamine amidotransferase type-1 domain is found at 39–164 (TIANPNSLFM…VITVKIIIYM (126 aa)).

In Rickettsia prowazekii (strain Madrid E), this protein is Putative glutamine amidotransferase-like protein RP713.